Reading from the N-terminus, the 269-residue chain is Growth-regulating factor 11 (269 aa).

Residues Met-1–Ser-11 show a composition bias toward basic and acidic residues. Positions Met-1 to Val-71 are disordered. The segment covering Gly-43–Gly-52 has biased composition (gly residues). The segment covering Glu-58–Glu-68 has biased composition (acidic residues). One can recognise a QLQ domain in the interval Ala-114–Lys-149. Residues Glu-180–Glu-224 form the WRC domain. Short sequence motifs (bipartite nuclear localization signal) lie at residues Arg-185–Arg-195 and Arg-213–Arg-217. Residues His-212 to Thr-269 form a disordered region. The segment covering Glu-243–Ser-253 has biased composition (basic and acidic residues). The span at Ser-255–Thr-269 shows a compositional bias: low complexity.

This sequence belongs to the GRF family.

It is found in the nucleus. In terms of biological role, transcription activator that plays a regulatory role in gibberellin-induced stem elongation. This Oryza sativa subsp. japonica (Rice) protein is Growth-regulating factor 11 (GRF11).